The primary structure comprises 442 residues: 3-phosphoshikimate 1-carboxyvinyltransferase (442 aa).

Positions 25, 26, and 30 each coordinate 3-phosphoshikimate. Lys25 serves as a coordination point for phosphoenolpyruvate. The phosphoenolpyruvate site is built by Gly96 and Arg124. Positions 171, 172, 173, 203, 325, and 352 each coordinate 3-phosphoshikimate. Gln173 is a phosphoenolpyruvate binding site. Residue Asp325 is the Proton acceptor of the active site. 3 residues coordinate phosphoenolpyruvate: Arg356, Arg400, and Lys425.

The protein belongs to the EPSP synthase family. As to quaternary structure, monomer.

It is found in the cytoplasm. The catalysed reaction is 3-phosphoshikimate + phosphoenolpyruvate = 5-O-(1-carboxyvinyl)-3-phosphoshikimate + phosphate. It functions in the pathway metabolic intermediate biosynthesis; chorismate biosynthesis; chorismate from D-erythrose 4-phosphate and phosphoenolpyruvate: step 6/7. Functionally, catalyzes the transfer of the enolpyruvyl moiety of phosphoenolpyruvate (PEP) to the 5-hydroxyl of shikimate-3-phosphate (S3P) to produce enolpyruvyl shikimate-3-phosphate and inorganic phosphate. The chain is 3-phosphoshikimate 1-carboxyvinyltransferase from Bordetella bronchiseptica (strain ATCC BAA-588 / NCTC 13252 / RB50) (Alcaligenes bronchisepticus).